Consider the following 223-residue polypeptide: Endo-1,4-beta-xylanase 2 (223 aa).

Residues 1–19 (MVSFTSLLAGVAAISGVLA) form the signal peptide. A propeptide spanning residues 20–33 (APAAEVESVAVEKR) is cleaved from the precursor. Glutamine 34 carries the post-translational modification Pyrrolidone carboxylic acid. The GH11 domain maps to 34 to 222 (QTIQPGTGYN…FSSGSASITV (189 aa)). N-linked (GlcNAc...) asparagine glycosylation is found at asparagine 71 and asparagine 94. The substrate site is built by tyrosine 106 and tyrosine 110. Glutamate 119 acts as the Nucleophile in catalysis. Residues tyrosine 121, arginine 155, proline 159, glutamine 169, and tyrosine 204 each contribute to the substrate site. Glutamate 210 acts as the Proton donor in catalysis.

It belongs to the glycosyl hydrolase 11 (cellulase G) family.

It is found in the secreted. It catalyses the reaction Endohydrolysis of (1-&gt;4)-beta-D-xylosidic linkages in xylans.. Its pathway is glycan degradation; xylan degradation. Glycoside hydrolase involved in the hydrolysis of xylan, a major plant cell wall hemicellulose made up of 1,4-beta-linked D-xylopyranose residues. Catalyzes the endohydrolysis of the main-chain 1,4-beta-glycosidic bonds connecting the xylose subunits yielding various xylooligosaccharides and xylose. The catalysis proceeds by a double-displacement reaction mechanism with a putative covalent glycosyl-enzyme intermediate, with retention of the anomeric configuration. Produces xylobiose and xylose as the main degradation products. In Hypocrea jecorina (strain ATCC 56765 / BCRC 32924 / NRRL 11460 / Rut C-30) (Trichoderma reesei), this protein is Endo-1,4-beta-xylanase 2.